The primary structure comprises 413 residues: MSKKDIKKVVLAYSGGLDTSIILKWLQDEYNAEVITFTADLGQGEEVEPARQKAIACGIKPENVFILDIKEEFVKDYVFPMFRANAIYEGEYLLGTSIARPLIAKKLVEIANQKGAEAVSHGATGKGNDQVRFELGALALNPDLKVIAPWREWTLNSRESLLEYAKKNGIEISQKHVDENGNPKISPYSMDANLLHISYEGLHLENPANEPEESMWLWTNSPEQAPDEAEYITIGYKNGDPISINGKELSPATLLKTLNDYGNKHGIGRVDIVENRYVGMKARGCYETPGGTIMLKAHRAIESLTLDREAAHLKDELMPRYAKLIYQGYWFSPEREMLQAAIDATQKNVEGTVRLKLYKGNVTVVGRESSKSLYDDAYSTFEKDEVYNQKDAEGFIRLNALRFIIAGKKNNKK.

Residues 12 to 20 and Ala39 contribute to the ATP site; that span reads AYSGGLDTS. Residues Tyr92 and Ser97 each contribute to the L-citrulline site. Gly122 is an ATP binding site. L-aspartate contacts are provided by Thr124, Asn128, and Asp129. Asn128 contributes to the L-citrulline binding site. Residues Arg132, Ser189, Ser198, Glu274, and Tyr286 each coordinate L-citrulline.

It belongs to the argininosuccinate synthase family. Type 1 subfamily. In terms of assembly, homotetramer.

It is found in the cytoplasm. It carries out the reaction L-citrulline + L-aspartate + ATP = 2-(N(omega)-L-arginino)succinate + AMP + diphosphate + H(+). It participates in amino-acid biosynthesis; L-arginine biosynthesis; L-arginine from L-ornithine and carbamoyl phosphate: step 2/3. The polypeptide is Argininosuccinate synthase (Aliarcobacter butzleri (strain RM4018) (Arcobacter butzleri)).